Consider the following 31-residue polypeptide: Alpha-conotoxin Li1.12 (31 aa).

Positions 1-15 (AGNAKMSALMALTIR) are excised as a propeptide. Intrachain disulfides connect Cys-17/Cys-23 and Cys-18/Cys-30. At Cys-30 the chain carries Cysteine amide.

It belongs to the conotoxin A superfamily. As to expression, expressed by the venom duct.

The protein resides in the secreted. Functionally, alpha-conotoxins act on postsynaptic membranes, they bind to the nicotinic acetylcholine receptors (nAChR) and thus inhibit them. This toxin inhibits alpha-3-beta-4, alpha-6/alpha-3-beta-4, and alpha-2-beta-4 nAChRs. The protein is Alpha-conotoxin Li1.12 of Conus lividus (Livid cone).